The primary structure comprises 300 residues: Ribosomal protein L11 methyltransferase (300 aa).

S-adenosyl-L-methionine is bound by residues Thr152, Gly173, Asp195, and Asn234.

It belongs to the methyltransferase superfamily. PrmA family.

The protein resides in the cytoplasm. It carries out the reaction L-lysyl-[protein] + 3 S-adenosyl-L-methionine = N(6),N(6),N(6)-trimethyl-L-lysyl-[protein] + 3 S-adenosyl-L-homocysteine + 3 H(+). Functionally, methylates ribosomal protein L11. This is Ribosomal protein L11 methyltransferase from Paraburkholderia phytofirmans (strain DSM 17436 / LMG 22146 / PsJN) (Burkholderia phytofirmans).